The chain runs to 93 residues: Pyrimidine/purine nucleoside phosphorylase (93 aa).

Belongs to the nucleoside phosphorylase PpnP family.

It catalyses the reaction a purine D-ribonucleoside + phosphate = a purine nucleobase + alpha-D-ribose 1-phosphate. It carries out the reaction adenosine + phosphate = alpha-D-ribose 1-phosphate + adenine. The enzyme catalyses cytidine + phosphate = cytosine + alpha-D-ribose 1-phosphate. The catalysed reaction is guanosine + phosphate = alpha-D-ribose 1-phosphate + guanine. It catalyses the reaction inosine + phosphate = alpha-D-ribose 1-phosphate + hypoxanthine. It carries out the reaction thymidine + phosphate = 2-deoxy-alpha-D-ribose 1-phosphate + thymine. The enzyme catalyses uridine + phosphate = alpha-D-ribose 1-phosphate + uracil. The catalysed reaction is xanthosine + phosphate = alpha-D-ribose 1-phosphate + xanthine. Functionally, catalyzes the phosphorolysis of diverse nucleosides, yielding D-ribose 1-phosphate and the respective free bases. Can use uridine, adenosine, guanosine, cytidine, thymidine, inosine and xanthosine as substrates. Also catalyzes the reverse reactions. The chain is Pyrimidine/purine nucleoside phosphorylase from Pseudomonas paraeruginosa (strain DSM 24068 / PA7) (Pseudomonas aeruginosa (strain PA7)).